The following is a 157-amino-acid chain: Protein MG115 (157 aa).

It belongs to the CinA family.

This Mycoplasma genitalium (strain ATCC 33530 / DSM 19775 / NCTC 10195 / G37) (Mycoplasmoides genitalium) protein is Protein MG115.